Reading from the N-terminus, the 273-residue chain is MSDNKERKSQGFPKEDNQDTSSLADAVEKVAKQQQSQASEIEKNKKVLFNLKNELHELEKEIAAISAETKETERQIYQQDSAIENTKLHCDSLETQIKSLHSENVKLKFDIETAQEDFEEHMIKYNAYYAKIKAHKNSLGEVESKWSFMTELHEKRDFVKKLKTMKEELMQDLQNPGGNRITQVQEDITNLKDKIITVKESIIEKTCFLEEEKKTHEKLRKEIEVQHKRYDAILKRLHCQVNKLQSNRRQWQWNIQQLEKTAAELRKCIGMQE.

Residues 1–17 (MSDNKERKSQGFPKEDN) are compositionally biased toward basic and acidic residues. Positions 1-39 (MSDNKERKSQGFPKEDNQDTSSLADAVEKVAKQQQSQAS) are disordered. Coiled coils occupy residues 24-116 (ADAV…TAQE) and 179-269 (NRIT…RKCI).

This chain is Coiled-coil domain-containing protein 122 (CCDC122), found in Homo sapiens (Human).